The following is a 189-amino-acid chain: Peptidyl-tRNA hydrolase (189 aa).

Tyrosine 16 serves as a coordination point for tRNA. The active-site Proton acceptor is histidine 21. Positions 67, 69, and 115 each coordinate tRNA.

Belongs to the PTH family. As to quaternary structure, monomer.

The protein resides in the cytoplasm. It carries out the reaction an N-acyl-L-alpha-aminoacyl-tRNA + H2O = an N-acyl-L-amino acid + a tRNA + H(+). In terms of biological role, hydrolyzes ribosome-free peptidyl-tRNAs (with 1 or more amino acids incorporated), which drop off the ribosome during protein synthesis, or as a result of ribosome stalling. Its function is as follows. Catalyzes the release of premature peptidyl moieties from peptidyl-tRNA molecules trapped in stalled 50S ribosomal subunits, and thus maintains levels of free tRNAs and 50S ribosomes. This chain is Peptidyl-tRNA hydrolase, found in Legionella pneumophila subsp. pneumophila (strain Philadelphia 1 / ATCC 33152 / DSM 7513).